Here is a 569-residue protein sequence, read N- to C-terminus: Urease subunit beta (569 aa).

The Urease domain maps to 131-569; that stretch reads GGIDTHIHFI…VSLAQLFSIF (439 aa). Residues His136, His138, and Lys219 each coordinate Ni(2+). Lys219 carries the N6-carboxylysine modification. His221 provides a ligand contact to substrate. Ni(2+)-binding residues include His248 and His274. His322 (proton donor) is an active-site residue. A Ni(2+)-binding site is contributed by Asp362.

This sequence belongs to the metallo-dependent hydrolases superfamily. Urease alpha subunit family. As to quaternary structure, heterohexamer of 3 UreA (alpha) and 3 UreB (beta) subunits. Ni cation is required as a cofactor. Post-translationally, carboxylation allows a single lysine to coordinate two nickel ions.

The protein localises to the cytoplasm. It catalyses the reaction urea + 2 H2O + H(+) = hydrogencarbonate + 2 NH4(+). It participates in nitrogen metabolism; urea degradation; CO(2) and NH(3) from urea (urease route): step 1/1. The chain is Urease subunit beta from Helicobacter pylori (strain HPAG1).